The primary structure comprises 334 residues: Immune-associated nucleotide-binding protein 3 (334 aa).

Residues 11-219 (KAVKNIVLVG…FRGKMYLEIK (209 aa)) enclose the AIG1-type G domain. The segment at 20 to 27 (GRTGNGKS) is G1. GTP is bound by residues 20–28 (GRTGNGKSA) and Ser-41. The tract at residues 47 to 51 (GVTKT) is G2. A G3 region spans residues 69-72 (DTPG). Residues 139–142 (TGGD) are G4. The G5 stretch occupies residues 178-180 (NNM). Asn-179 is a GTP binding site. Positions 272 to 306 (SAAHERMVSMLNENLENAHRENIDLRKAHDHEQKK) form a coiled coil.

It belongs to the TRAFAC class TrmE-Era-EngA-EngB-Septin-like GTPase superfamily. AIG1/Toc34/Toc159-like paraseptin GTPase family. IAN subfamily. As to expression, mostly expressed in pollen. Also detected in lateral roots and radicles.

The polypeptide is Immune-associated nucleotide-binding protein 3 (Arabidopsis thaliana (Mouse-ear cress)).